The chain runs to 84 residues: Alpha-mammal toxin Aah3 (84 aa).

The first 19 residues, 1 to 19, serve as a signal peptide directing secretion; that stretch reads MNYLVMISLALLLMTGVES. The region spanning 21-82 is the LCN-type CS-alpha/beta domain; sequence RDGYIVDSKN…PIKDPSYKCH (62 aa). Cystine bridges form between Cys31/Cys81, Cys35/Cys53, Cys39/Cys63, and Cys43/Cys65. Arg84 is a propeptide (removed by a carboxypeptidase).

It belongs to the long (4 C-C) scorpion toxin superfamily. Sodium channel inhibitor family. Alpha subfamily. In terms of tissue distribution, expressed by the venom gland.

The protein resides in the secreted. Alpha toxins bind voltage-independently at site-3 of sodium channels (Nav) and inhibit the inactivation of the activated channels, thereby blocking neuronal transmission. The sequence is that of Alpha-mammal toxin Aah3 from Androctonus australis (Sahara scorpion).